The following is a 250-amino-acid chain: 3-deoxy-manno-octulosonate cytidylyltransferase (250 aa).

Belongs to the KdsB family.

It is found in the cytoplasm. It carries out the reaction 3-deoxy-alpha-D-manno-oct-2-ulosonate + CTP = CMP-3-deoxy-beta-D-manno-octulosonate + diphosphate. It functions in the pathway nucleotide-sugar biosynthesis; CMP-3-deoxy-D-manno-octulosonate biosynthesis; CMP-3-deoxy-D-manno-octulosonate from 3-deoxy-D-manno-octulosonate and CTP: step 1/1. Its pathway is bacterial outer membrane biogenesis; lipopolysaccharide biosynthesis. In terms of biological role, activates KDO (a required 8-carbon sugar) for incorporation into bacterial lipopolysaccharide in Gram-negative bacteria. The polypeptide is 3-deoxy-manno-octulosonate cytidylyltransferase (Cytophaga hutchinsonii (strain ATCC 33406 / DSM 1761 / CIP 103989 / NBRC 15051 / NCIMB 9469 / D465)).